The following is a 439-amino-acid chain: Trehalose-phosphatase (439 aa).

Mg(2+)-binding residues include aspartate 163 and aspartate 165. Residue aspartate 165 is the Proton donor/acceptor of the active site. Substrate is bound at residue 282–284 (QRK). Aspartate 373 serves as a coordination point for Mg(2+).

The protein belongs to the gob-1 trehalose phosphatase family. Mg(2+) serves as cofactor. Ubiquitously expressed. Strong expression in intestine.

It catalyses the reaction alpha,alpha-trehalose 6-phosphate + H2O = alpha,alpha-trehalose + phosphate. Its function is as follows. Catalyzes the hydrolysis of trehalose 6-phosphate to trehalose and phosphate; prevents the accumulation of toxic levels of trehalose 6-phosphate. This chain is Trehalose-phosphatase, found in Caenorhabditis elegans.